A 343-amino-acid polypeptide reads, in one-letter code: CMP-N-acetylneuraminate-beta-galactosamide-alpha-2,3-sialyltransferase 1 (343 aa).

The Cytoplasmic portion of the chain corresponds to 1 to 11 (MAPMRKKSTLK). The helical; Signal-anchor for type II membrane protein transmembrane segment at 12-27 (LLTLLVLFIFLTSFFL) threads the bilayer. The N-linked (GlcNAc...) asparagine glycan is linked to Asn-28. The Lumenal portion of the chain corresponds to 28–343 (NYSHTVVTTA…INKIRIFKGR (316 aa)). 3 disulfides stabilise this stretch: Cys-62-Cys-67, Cys-64-Cys-142, and Cys-145-Cys-284. The N-linked (GlcNAc...) asparagine glycan is linked to Asn-82. Gln-108 contributes to the substrate binding site. The N-linked (GlcNAc...) asparagine glycan is linked to Asn-117. 8 residues coordinate substrate: Asn-150, Asn-173, Tyr-233, Tyr-269, Gly-273, Gly-293, His-302, and His-319. N-linked (GlcNAc...) asparagine glycosylation occurs at Asn-326.

It belongs to the glycosyltransferase 29 family. In terms of processing, the soluble form derives from the membrane form by proteolytic processing. In terms of tissue distribution, the long isoform is abundant in salivary gland, liver, lung, and colon mucosa. Both long and short forms are detected in submaxillary salivary glands.

Its subcellular location is the golgi apparatus. It localises to the golgi stack membrane. The protein resides in the trans-Golgi network membrane. The protein localises to the secreted. The enzyme catalyses a beta-D-galactosyl-(1-&gt;3)-N-acetyl-alpha-D-galactosaminyl derivative + CMP-N-acetyl-beta-neuraminate = an N-acetyl-alpha-neuraminyl-(2-&gt;3)-beta-D-galactosyl-(1-&gt;3)-N-acetyl-alpha-D-galactosaminyl derivative + CMP + H(+). It catalyses the reaction a ganglioside GM1 (d18:1(4E)) + CMP-N-acetyl-beta-neuraminate = a ganglioside GD1a (d18:1(4E)) + CMP + H(+). The catalysed reaction is ganglioside GM1 (d18:1(4E)/18:0) + CMP-N-acetyl-beta-neuraminate = ganglioside GD1a (18:1(4E)/18:0) + CMP + H(+). It carries out the reaction a ganglioside GA1 (d18:1(4E)) + CMP-N-acetyl-beta-neuraminate = a ganglioside GM1b (d18:1(4E)) + CMP + H(+). The enzyme catalyses a ganglioside GD1b + CMP-N-acetyl-beta-neuraminate = a ganglioside GT1b + CMP + H(+). It catalyses the reaction a 3-O-[beta-D-galactosyl-(1-&gt;3)-N-acetyl-alpha-D-galactosaminyl]-L-threonyl-[protein] + CMP-N-acetyl-beta-neuraminate = a 3-O-[N-acetyl-alpha-neuraminyl-(2-&gt;3)-beta-D-galactosyl-(1-&gt;3)-N-acetyl-alpha-D-galactosaminyl]-L-threonyl-[protein] + CMP + H(+). The catalysed reaction is a 3-O-[beta-D-galactosyl-(1-&gt;3)-N-acetyl-alpha-D-galactosaminyl]-L-seryl-[protein] + CMP-N-acetyl-beta-neuraminate = 3-O-[N-acetyl-alpha-neuraminyl-(2-&gt;3)-beta-D-galactosyl-(1-&gt;3)-N-acetyl-alpha-D-galactosaminyl]-L-seryl-[protein] + CMP + H(+). It functions in the pathway protein modification; protein glycosylation. The protein operates within glycolipid biosynthesis. In terms of biological role, a beta-galactoside alpha2-&gt;3 sialyltransferase involved in terminal sialylation of glycoproteins and glycolipids. Catalyzes the transfer of sialic acid (N-acetyl-neuraminic acid; Neu5Ac) from the nucleotide sugar donor CMP-Neu5Ac onto acceptor Galbeta-(1-&gt;3)-GalNAc-terminated glycoconjugates through an alpha2-3 linkage. Adds sialic acid to the core 1 O-glycan, Galbeta-(1-&gt;3)-GalNAc-O-Ser/Thr, which is a major structure of mucin-type O-glycans. As part of a homeostatic mechanism that regulates CD8-positive T cell numbers, sialylates core 1 O-glycans of T cell glycoproteins, SPN/CD43 and PTPRC/CD45. Prevents premature apoptosis of thymic CD8-positive T cells prior to peripheral emigration, whereas in the secondary lymphoid organs controls the survival of CD8-positive memory T cells generated following a successful immune response. Transfers sialic acid to asialofetuin, presumably onto Galbeta-(1-&gt;3)-GalNAc-O-Ser. Sialylates GM1a, GA1 and GD1b gangliosides to form GD1a, GM1b and GT1b, respectively. In Sus scrofa (Pig), this protein is CMP-N-acetylneuraminate-beta-galactosamide-alpha-2,3-sialyltransferase 1 (ST3GAL1).